We begin with the raw amino-acid sequence, 255 residues long: MTSILVSSFLLATLVLQYATIDAVDYCRLPCRGDNYHVGCREPAYAQECGQSPRTRELLKEHRNEILSKINDVRDHVAKGSWGLPVAARMKVVVWDAELAGLAKRHTKGCVGETLECRNTERLFSPGYLNFKYSGDKLPRIMELIDAAVKKGHLQKHNITREIIESYRDNGPDGNVKELALAISDRVTAVGCGLTTWQDGAKARALLTCNFSSQNIWGRPVYKVGNSPGEKCIEKDETYTNLCSATEPIDPNKSN.

The signal sequence occupies residues Met-1–Ala-23. The short motif at Arg-32–Asp-34 is the Cell attachment site element. The 145-residue stretch at Leu-67–Phe-211 folds into the SCP domain.

The protein belongs to the CRISP family. Expressed in salivary glands.

Its subcellular location is the secreted. Functionally, inhibits platelet aggregation induced by all agonists tested (ADP, arachidonic acid, the thromboxane A2 analog U46619, thrombin, and snake venom snaclecs (TMVA that activates platelet through GPIB, and stejnulxin that specifically acts through GPVI (GP6))). May act by competing with fibrinogen for binding to glycoprotein IIb/IIIa (ITGA2B/ITGB3). This chain is Tabinhibitin 7, found in Tabanus yao (Horsefly).